Reading from the N-terminus, the 404-residue chain is Cysteine desulfurase IscS (404 aa).

Residues 75 to 76 (AT), Asn-155, Gln-183, and 203 to 205 (SSH) contribute to the pyridoxal 5'-phosphate site. An N6-(pyridoxal phosphate)lysine modification is found at Lys-206. Thr-243 contacts pyridoxal 5'-phosphate. Cys-328 functions as the Cysteine persulfide intermediate in the catalytic mechanism. Cys-328 contributes to the [2Fe-2S] cluster binding site.

It belongs to the class-V pyridoxal-phosphate-dependent aminotransferase family. NifS/IscS subfamily. Homodimer. Forms a heterotetramer with IscU, interacts with other sulfur acceptors. Pyridoxal 5'-phosphate is required as a cofactor.

It is found in the cytoplasm. It catalyses the reaction (sulfur carrier)-H + L-cysteine = (sulfur carrier)-SH + L-alanine. It participates in cofactor biosynthesis; iron-sulfur cluster biosynthesis. Master enzyme that delivers sulfur to a number of partners involved in Fe-S cluster assembly, tRNA modification or cofactor biosynthesis. Catalyzes the removal of elemental sulfur atoms from cysteine to produce alanine. Functions as a sulfur delivery protein for Fe-S cluster synthesis onto IscU, an Fe-S scaffold assembly protein, as well as other S acceptor proteins. This chain is Cysteine desulfurase IscS, found in Histophilus somni (strain 129Pt) (Haemophilus somnus).